The following is a 511-amino-acid chain: 2-isopropylmalate synthase (511 aa).

Residues 6-269 (IIIFDTTLRD…YTDIKCENIF (264 aa)) enclose the Pyruvate carboxyltransferase domain. The Mn(2+) site is built by Asp15, His203, His205, and Asn239. Positions 394 to 511 (ILEKLSVISG…SLKVEERKMA (118 aa)) are regulatory domain.

Belongs to the alpha-IPM synthase/homocitrate synthase family. LeuA type 1 subfamily. In terms of assembly, homodimer. The cofactor is Mn(2+).

It is found in the cytoplasm. It carries out the reaction 3-methyl-2-oxobutanoate + acetyl-CoA + H2O = (2S)-2-isopropylmalate + CoA + H(+). It participates in amino-acid biosynthesis; L-leucine biosynthesis; L-leucine from 3-methyl-2-oxobutanoate: step 1/4. Catalyzes the condensation of the acetyl group of acetyl-CoA with 3-methyl-2-oxobutanoate (2-ketoisovalerate) to form 3-carboxy-3-hydroxy-4-methylpentanoate (2-isopropylmalate). The sequence is that of 2-isopropylmalate synthase from Campylobacter jejuni subsp. jejuni serotype O:6 (strain 81116 / NCTC 11828).